The following is a 1032-amino-acid chain: Beta-galactosidase (1032 aa).

Substrate is bound by residues N100 and D198. D198 is a Na(+) binding site. 3 residues coordinate Mg(2+): E413, H415, and E458. Substrate contacts are provided by residues E458 and 534–537; that span reads EYAH. Residue E458 is the Proton donor of the active site. E534 acts as the Nucleophile in catalysis. Position 594 (N594) interacts with Mg(2+). Na(+)-binding residues include F598 and N601. Substrate-binding residues include N601 and W1006.

Belongs to the glycosyl hydrolase 2 family. In terms of assembly, homotetramer. It depends on Mg(2+) as a cofactor. Requires Na(+) as cofactor.

It catalyses the reaction Hydrolysis of terminal non-reducing beta-D-galactose residues in beta-D-galactosides.. This Vibrio vulnificus (strain CMCP6) protein is Beta-galactosidase.